A 209-amino-acid chain; its full sequence is CASP-like protein 2A2 (209 aa).

Residues 1 to 37 are Cytoplasmic-facing; the sequence is MSKTAGVGRLGGARAADAAQQQQLAAGDAAVARAARP. Residues 38-58 form a helical membrane-spanning segment; it reads IETLLRAAPLVLCVAAMTLML. The Extracellular segment spans residues 59 to 79; that stretch reads RDQQSNEYGTVAYSDLGGFKY. The chain crosses the membrane as a helical span at residues 80 to 100; the sequence is LVYANGLCAAYSLASAFYTAV. Residues 101–109 lie on the Cytoplasmic side of the membrane; that stretch reads PRPATVSRS. A helical transmembrane segment spans residues 110-130; the sequence is WVVFLLDQVFTYLILAAGAAA. Topologically, residues 131-161 are extracellular; it reads AELLYLAYNGDKEVTWSEACGVFGSFCRQAR. Residues 162–182 traverse the membrane as a helical segment; the sequence is ISVAITFGAVLCFILLSLLSS. The Cytoplasmic portion of the chain corresponds to 183–209; sequence YRLFSAYEAPPPSALGSKGVEIAAYPR.

This sequence belongs to the Casparian strip membrane proteins (CASP) family. Homodimer and heterodimers.

Its subcellular location is the cell membrane. This Zea mays (Maize) protein is CASP-like protein 2A2.